Here is a 100-residue protein sequence, read N- to C-terminus: Envelope glycoprotein N (100 aa).

The signal sequence occupies residues 1–27 (MLSTRFVTLAILACLLVVLGLARGAGG). Residues 28–63 (DPGVKQRIDVAREEERRDFWHAACSGHGFPITTPST) are Virion surface-facing. A helical membrane pass occupies residues 64-84 (AAILFYVSLLAVGVAVACQAY). Topologically, residues 85–100 (RAVLRIVTLEMLQHLH) are intravirion.

The protein belongs to the herpesviridae glycoprotein N family. Interacts (via N-terminus) with gM (via N-terminus). The gM-gN heterodimer forms the gCII complex.

Its subcellular location is the virion membrane. It is found in the host membrane. The protein localises to the host Golgi apparatus. It localises to the host trans-Golgi network. Its function is as follows. Envelope glycoprotein necessary for proper maturation of gM and modulation of its membrane fusion activity. Also plays a critical role in virion morphogenesis. This Equus caballus (Horse) protein is Envelope glycoprotein N.